The primary structure comprises 191 residues: NRRPHFLYPKSRLIRSLLPPPHYGPLSFHDMFQPFLEMIHQAQQAMDVQFHSPAFQFPDMDLLREGEDDRAVCKEIRHNSTGCLKMKGQCEKCQEILSVDCSANNPAQAHLRQELNDSLQVAERLTQRYNELLHSLQTKMLNTSSLLEQLNEQFNWVSQLANLTQGEDQYYLRVSTVTTHSSDSEVPSRVT.

N-linked (GlcNAc...) asparagine glycans are attached at residues N79, N116, N142, and N162. Residue S184 is modified to Phosphoserine.

This sequence belongs to the clusterin family. As to quaternary structure, antiparallel disulfide-linked heterodimer of an alpha chain and a beta chain. Self-associates and forms higher oligomers. Interacts with a broad range of misfolded proteins, including APP, APOC2 and LYZ. Slightly acidic pH promotes interaction with misfolded proteins. Forms high-molecular weight oligomers upon interaction with misfolded proteins. Interacts with APOA1, LRP2, CLUAP1 and PON1. Interacts with the complement membrane attack complex. Interacts (via alpha chain) with XRCC6. Interacts with SYVN1, COMMD1, BTRC, CUL1 and with ubiquitin and SCF (SKP1-CUL1-F-box protein) E3 ubiquitin-protein ligase complexes. Interacts (via alpha chain) with BAX in stressed cells, where BAX undergoes a conformation change leading to association with the mitochondrial membrane. Does not interact with BAX in unstressed cells. Found in a complex with LTF, CLU, EPPIN and SEMG1. Interacts (immaturely glycosylated pre-secreted form) with HSPA5; this interaction promotes CLU stability and facilitates stress-induced CLU retrotranslocation from the secretory pathway to the mitochondria, thereby reducing stress-induced apoptosis by stabilizing mitochondrial membrane integrity. Interacts with BCL2L1; this interaction releases and activates BAX and promotes cell death. Interacts with TGFBR2 and ACVR1. Interacts (secreted form) with STMN3; this interaction may act as an important modulator during neuronal differentiation. Proteolytically cleaved on its way through the secretory system, probably within the Golgi lumen. Proteolytic cleavage is not necessary for its chaperone activity. All non-secreted forms are not proteolytically cleaved. Chaperone activity of uncleaved forms is dependent on a non-reducing environment. Post-translationally, polyubiquitinated, leading to proteasomal degradation. Under cellular stress, the intracellular level of cleaved form is reduced due to proteasomal degradation. In terms of processing, heavily N-glycosylated. About 30% of the protein mass is comprised of complex N-linked carbohydrate. Endoplasmic reticulum (ER) stress induces changes in glycosylation status and increases level of hypoglycosylated forms. Core carbohydrates are essential for chaperone activity. Non-secreted forms are hypoglycosylated or unglycosylated.

Its subcellular location is the secreted. It is found in the nucleus. The protein resides in the cytoplasm. The protein localises to the mitochondrion membrane. It localises to the cytosol. Its subcellular location is the microsome. It is found in the endoplasmic reticulum. The protein resides in the mitochondrion. The protein localises to the perinuclear region. It localises to the cytoplasmic vesicle. Its subcellular location is the secretory vesicle. It is found in the chromaffin granule. Its function is as follows. Functions as extracellular chaperone that prevents aggregation of non native proteins. Prevents stress-induced aggregation of blood plasma proteins. Inhibits formation of amyloid fibrils by APP, APOC2, B2M, CALCA, CSN3, SNCA and aggregation-prone LYZ variants (in vitro). Does not require ATP. Maintains partially unfolded proteins in a state appropriate for subsequent refolding by other chaperones, such as HSPA8/HSC70. Does not refold proteins by itself. Binding to cell surface receptors triggers internalization of the chaperone-client complex and subsequent lysosomal or proteasomal degradation. When secreted, protects cells against apoptosis and against cytolysis by complement: inhibits assembly of the complement membrane attack complex (MAC) by preventing polymerization of C9 pore component of the MAC complex. Intracellular forms interact with ubiquitin and SCF (SKP1-CUL1-F-box protein) E3 ubiquitin-protein ligase complexes and promote the ubiquitination and subsequent proteasomal degradation of target proteins. Promotes proteasomal degradation of COMMD1 and IKBKB. Modulates NF-kappa-B transcriptional activity. Following stress, promotes apoptosis. Inhibits apoptosis when associated with the mitochondrial membrane by interference with BAX-dependent release of cytochrome c into the cytoplasm. Plays a role in the regulation of cell proliferation. An intracellular form suppresses stress-induced apoptosis by stabilizing mitochondrial membrane integrity through interaction with HSPA5. Secreted form does not affect caspase or BAX-mediated intrinsic apoptosis and TNF-induced NF-kappa-B-activity. Secreted form act as an important modulator during neuronal differentiation through interaction with STMN3. Plays a role in the clearance of immune complexes that arise during cell injury. In Mesocricetus auratus (Golden hamster), this protein is Clusterin.